Here is a 226-residue protein sequence, read N- to C-terminus: ATP-dependent dethiobiotin synthetase BioD (226 aa).

ATP is bound at residue 14-19; that stretch reads GIGKTF. Thr18 provides a ligand contact to Mg(2+). Lys39 is an active-site residue. Ser43 contacts substrate. ATP is bound by residues Asp56, 117–120, 177–178, 206–208, and Asn213; these read EGVG, NT, and PHI. Mg(2+)-binding residues include Asp56 and Glu117.

The protein belongs to the dethiobiotin synthetase family. As to quaternary structure, homodimer. Mg(2+) serves as cofactor.

Its subcellular location is the cytoplasm. It catalyses the reaction (7R,8S)-7,8-diammoniononanoate + CO2 + ATP = (4R,5S)-dethiobiotin + ADP + phosphate + 3 H(+). It participates in cofactor biosynthesis; biotin biosynthesis; biotin from 7,8-diaminononanoate: step 1/2. Functionally, catalyzes a mechanistically unusual reaction, the ATP-dependent insertion of CO2 between the N7 and N8 nitrogen atoms of 7,8-diaminopelargonic acid (DAPA, also called 7,8-diammoniononanoate) to form a ureido ring. This is ATP-dependent dethiobiotin synthetase BioD from Xylella fastidiosa (strain Temecula1 / ATCC 700964).